The chain runs to 983 residues: Ephrin type-A receptor 3 (983 aa).

The N-terminal stretch at 1 to 20 (MDCQLSILLLLSCSVLDSFG) is a signal peptide. At 21 to 541 (ELIPQPSNEV…SFSISGESSQ (521 aa)) the chain is on the extracellular side. The Eph LBD domain occupies 29 to 207 (EVNLLDSKTI…YFKKCPFTVK (179 aa)). Residues Asn-232, Asn-337, Asn-391, Asn-404, and Asn-493 are each glycosylated (N-linked (GlcNAc...) asparagine). 2 Fibronectin type-III domains span residues 325–435 (PPSS…TNQA) and 436–531 (APSP…TSPD). A helical transmembrane segment spans residues 542 to 565 (VVMIAISAAVAIILLTVVIYVLIG). The Cytoplasmic segment spans residues 566–983 (RFCGYKSKHG…TQSKNGPVPV (418 aa)). Tyr-596 and Tyr-602 each carry phosphotyrosine; by autocatalysis. The region spanning 621 to 882 (ISIDKVVGAG…QIVSILDKLI (262 aa)) is the Protein kinase domain. ATP-binding positions include 628–633 (GAGEFG), Lys-653, and 700–706 (EYMENGS). Tyr-701 is subject to Phosphotyrosine; by autocatalysis. Catalysis depends on Asp-746, which acts as the Proton acceptor. 750 to 751 (RN) provides a ligand contact to ATP. Tyr-779 is modified (phosphotyrosine; by autocatalysis). Positions 911–975 (TTFRTTGDWL…ISSIKALETQ (65 aa)) constitute an SAM domain. Phosphotyrosine is present on Tyr-937. Positions 981 to 983 (VPV) match the PDZ-binding motif.

This sequence belongs to the protein kinase superfamily. Tyr protein kinase family. Ephrin receptor subfamily. Heterotetramer upon binding of the ligand. The heterotetramer is composed of an ephrin dimer and a receptor dimer. Oligomerization is probably required to induce biological responses. Forms a ternary EFNA5-EPHA3-ADAM10 complex mediating EFNA5 extracellular domain shedding by ADAM10 which regulates the EFNA5-EPHA3 complex internalization and function. Interacts with NCK1 (via SH2 domain); mediates EFNA5-EPHA3 signaling. Interacts (phosphorylated) with PTPN1; dephosphorylates EPHA3 and may regulate its trafficking and function. Interacts (phosphorylated) with CRK; mediates EFNA5-EPHA3 signaling through RHOA GTPase activation. Post-translationally, autophosphorylates upon activation by EFNA5. Phosphorylation on Tyr-602 mediates interaction with NCK1. Dephosphorylated by PTPN1. Widely expressed. Highest level in placenta.

It is found in the cell membrane. It localises to the secreted. It carries out the reaction L-tyrosyl-[protein] + ATP = O-phospho-L-tyrosyl-[protein] + ADP + H(+). Its function is as follows. Receptor tyrosine kinase which binds promiscuously membrane-bound ephrin family ligands residing on adjacent cells, leading to contact-dependent bidirectional signaling into neighboring cells. The signaling pathway downstream of the receptor is referred to as forward signaling while the signaling pathway downstream of the ephrin ligand is referred to as reverse signaling. Highly promiscuous for ephrin-A ligands it binds preferentially EFNA5. Upon activation by EFNA5 regulates cell-cell adhesion, cytoskeletal organization and cell migration. Plays a role in cardiac cells migration and differentiation and regulates the formation of the atrioventricular canal and septum during development probably through activation by EFNA1. Involved in the retinotectal mapping of neurons. May also control the segregation but not the guidance of motor and sensory axons during neuromuscular circuit development. This Homo sapiens (Human) protein is Ephrin type-A receptor 3 (EPHA3).